A 623-amino-acid chain; its full sequence is NADPH-dependent diflavin oxidoreductase 1 (623 aa).

The Flavodoxin-like domain occupies 7 to 168 (IVILYGSETG…VYFEYEKKVL (162 aa)). FMN contacts are provided by residues 13–18 (SETGNA), 60–63 (STTG), 106–115 (LGDSSYPKFN), and aspartate 142. In terms of domain architecture, FAD-binding FR-type spans 224-491 (ESLKVGRVNI…VGPGVGLAPL (268 aa)). FAD contacts are provided by residues arginine 383, 413–416 (RYYS), and 445–448 (GICT). 538-539 (SR) lines the NADP(+) pocket. Tryptophan 623 is an FAD binding site.

It belongs to the NADPH-dependent diflavin oxidoreductase NDOR1 family. The protein in the N-terminal section; belongs to the flavodoxin family. In the C-terminal section; belongs to the flavoprotein pyridine nucleotide cytochrome reductase family. Interacts with DRE2; as part of the cytosolic iron-sulfur (Fe-S) protein assembly (CIA) machinery. FAD serves as cofactor. It depends on FMN as a cofactor.

The protein localises to the cytoplasm. It is found in the mitochondrion. It carries out the reaction 2 oxidized [2Fe-2S]-[protein] + NADPH = 2 reduced [2Fe-2S]-[protein] + NADP(+) + H(+). Its function is as follows. NADPH-dependent reductase which is a central component of the cytosolic iron-sulfur (Fe-S) protein assembly (CIA) machinery. Transfers electrons from NADPH via its FAD and FMN prosthetic groups to the [2Fe-2S] cluster of DRE2, another key component of the CIA machinery. In turn, this reduced cluster provides electrons for assembly of cytosolic iron-sulfur cluster proteins. Positively controls H(2)O(2)-induced cell death. In Saccharomyces cerevisiae (strain ATCC 204508 / S288c) (Baker's yeast), this protein is NADPH-dependent diflavin oxidoreductase 1.